Here is a 1132-residue protein sequence, read N- to C-terminus: MASDGASALPGPDMSMKPSAAPSPSPALPFLPPTSDPPDHPPREPPPQPIMPSVFSPDNPLMLSAFPSSLLVTGDGGPCLSGAGAGKVIVKVKTEGGSAEPSQTQNFILTQTALNSTAPGTPCGGLEGPAPPFVTASNVKTILPSKAVGVSQEGPPGLPPQPPPPVAQLVPIVPLEKAWPGPHGTTGEGGPVATLSKPSLGDRSKISKDVYENFRQWQRYKALARRHLSQSPDTEALSCFLIPVLRSLARLKPTMTLEEGLPLAVQEWEHTSNFDRMIFYEMAERFMEFEAEEMQIQNTQLMNGSQGLSPATPLKLDPLGPLASEVCQQPVYIPKKAASKTRAPRRRQRKAQRPPAPEAPKEIPPEAVKEYVDIMEWLVGTHLATGESDGKQEEEGQQQEEEGMYPDPGLLSYINELCSQKVFVSKVEAVIHPQFLADLLSPEKQRDPLALIEELEQEEGLTLAQLVQKRLMALEEEEDAEAPPSFSGAQLDSSPSGSVEDEDGDGRLRPSPGLQGAGGAACLGKVSSSGKRAREVHGGQEQALDSPRGMHRDGNTLPSPSSWDLQPELAAPQGTPGPLGVERRGSGKVINQVSLHQDGHLGGAGPPGHCLVADRTSEALPLCWQGGFQPESTPSLDAGLAELAPLQGQGLEKQVLGLQKGQQTGGRGVLPQGKEPLAVPWEGSSGAMWGDDRGTPMAQSYDQNPSPRAAGERDDVCLSPGVWLSSEMDAVGLELPVQIEEVIESFQVEKCVTEYQEGCQGLGSRGNISLGPGETLVPGDTESSVIPCGGTVAAAALEKRNYCSLPGPLRANSPPLRSKENQEQSCETVGHPSDLWAEGCFPLLESGDSTLGSSKETLPPTCQGNLLIMGTEDASSLPEASQEAGSRGNSFSPLLETIEPVNILDVKDDCGLQLRVSEDTCPLNVHSYDPQGEGRVDPDLSKPKNLAPLQESQESYTTGTPKATSSHQGLGSTLPRRGTRNAIVPRETSVSKTHRSADRAKGKEKKKKEAEEEDEELSNFAYLLASKLSLSPREHPLSPHHASGGQGSQRASHLLPAGAKGPSKLPYPVAKSGKRALAGGPAPTEKTPHSGAQLGVPREKPLALGVVRPSQPRKRRCDSFVTGRRKKRRRSQ.

7 disordered regions span residues 1-56 (MASD…SVFS), 337-365 (AASKTRAPRRRQRKAQRPPAPEAPKEIPP), 383-405 (LATGESDGKQEEEGQQQEEEGMY), 476-584 (EEED…VERR), 693-714 (RGTPMAQSYDQNPSPRAAGERD), 873-892 (DASSLPEASQEAGSRGNSFS), and 922-1017 (PLNV…DEEL). Residues 21–36 (APSPSPALPFLPPTSD) are compositionally biased toward pro residues. The segment covering 337–352 (AASKTRAPRRRQRKAQ) has biased composition (basic residues). The span at 395–404 (EGQQQEEEGM) shows a compositional bias: acidic residues. Polar residues-rich tracts occupy residues 487-497 (SGAQLDSSPSG), 697-706 (MAQSYDQNPS), and 883-892 (EAGSRGNSFS). Residues 932–942 (GEGRVDPDLSK) are compositionally biased toward basic and acidic residues. The segment covering 950-971 (QESQESYTTGTPKATSSHQGLG) has biased composition (polar residues). Phosphoserine is present on residues serine 1026, serine 1029, and serine 1031. Residues 1031 to 1132 (SPREHPLSPH…GRRKKRRRSQ (102 aa)) are disordered. Residue glutamine 1046 is modified to N5-methylglutamine. The span at 1123–1132 (GRRKKRRRSQ) shows a compositional bias: basic residues.

This sequence belongs to the NUT family. Post-translationally, methylated at Gln-1046 by N6AMT1. Phosphorylation on Ser-1026, Ser-1029 or Ser-1031 is important for cytoplasmic export. In terms of tissue distribution, specifically expressed in testis.

Its subcellular location is the cytoplasm. It localises to the nucleus. Its function is as follows. Plays a role in the regulation of proliferation. Regulates TERT expression by modulating SP1 binding to TERT promoter binding sites. The protein is NUT family member 1 of Homo sapiens (Human).